A 315-amino-acid polypeptide reads, in one-letter code: uncharacterized protein (315 aa).

Positions 1–23 (MSNTDALNTANTQITENVDTSSM) are enriched in polar residues. A disordered region spans residues 1–31 (MSNTDALNTANTQITENVDTSSMKVEKTHDS).

This is an uncharacterized protein from Acanthamoeba polyphaga mimivirus (APMV).